Here is a 463-residue protein sequence, read N- to C-terminus: Elongation factor 1-alpha (463 aa).

Position 2 is a n,N,N-trimethylglycine (Gly-2). At Lys-3 the chain carries N6,N6-dimethyllysine; alternate. Residue Lys-3 is modified to N6-methyllysine; alternate. Positions 5 to 239 (KNHVNVVVIG…DAIEPPSRPT (235 aa)) constitute a tr-type G domain. Residues 14–21 (GHVDSGKS) are G1. 14 to 21 (GHVDSGKS) contributes to the GTP binding site. Lys-30 bears the N6-methyllysine mark. Positions 70-74 (GITID) are G2. N6,N6,N6-trimethyllysine is present on Lys-79. The G3 stretch occupies residues 91 to 94 (DAPG). GTP is bound by residues 91 to 95 (DAPGH) and 153 to 156 (NKMD). Residues 153–156 (NKMD) are G4. The tract at residues 191 to 193 (SGW) is G5. Lys-315 bears the N6,N6-dimethyllysine; alternate mark. N6-methyllysine; alternate is present on Lys-315. At Lys-389 the chain carries N6-methyllysine.

This sequence belongs to the TRAFAC class translation factor GTPase superfamily. Classic translation factor GTPase family. EF-Tu/EF-1A subfamily.

It is found in the cytoplasm. This protein promotes the GTP-dependent binding of aminoacyl-tRNA to the A-site of ribosomes during protein biosynthesis. The chain is Elongation factor 1-alpha (TEF) from Puccinia graminis (Black stem rust fungus).